The primary structure comprises 245 residues: Probable phosphatase KPK_3500 (245 aa).

Zn(2+) is bound by residues histidine 7, histidine 9, histidine 15, histidine 40, glutamate 73, histidine 101, histidine 131, aspartate 192, and histidine 194.

This sequence belongs to the PHP family. Homotrimer. Zn(2+) serves as cofactor.

The chain is Probable phosphatase KPK_3500 from Klebsiella pneumoniae (strain 342).